Reading from the N-terminus, the 358-residue chain is tRNA-specific 2-thiouridylase MnmA (358 aa).

ATP-binding positions include 22-29 and phenylalanine 48; that span reads LVSGGIDS. Cysteine 105 serves as the catalytic Nucleophile. A disulfide bridge connects residues cysteine 105 and cysteine 201. Glycine 129 lines the ATP pocket. The segment at 151–153 is interaction with tRNA; that stretch reads KEQ. The active-site Cysteine persulfide intermediate is cysteine 201. Residues 306-307 are interaction with tRNA; that stretch reads RY.

The protein belongs to the MnmA/TRMU family.

Its subcellular location is the cytoplasm. It catalyses the reaction S-sulfanyl-L-cysteinyl-[protein] + uridine(34) in tRNA + AH2 + ATP = 2-thiouridine(34) in tRNA + L-cysteinyl-[protein] + A + AMP + diphosphate + H(+). Functionally, catalyzes the 2-thiolation of uridine at the wobble position (U34) of tRNA, leading to the formation of s(2)U34. The protein is tRNA-specific 2-thiouridylase MnmA of Desulfosudis oleivorans (strain DSM 6200 / JCM 39069 / Hxd3) (Desulfococcus oleovorans).